Consider the following 113-residue polypeptide: MAAVLEENGCSRQSSPGAGDSDAEAGDTARHKLESLLNRNMRIEMTDGRSLIGCFLCTDRDCNVILGSAQEFLRPSDSFPVREPRVLGLAMVPGHHIVSIQVELESVTSPQYI.

The segment at 1-29 is disordered; the sequence is MAAVLEENGCSRQSSPGAGDSDAEAGDTA. The 79-residue stretch at 28–106 folds into the Sm domain; the sequence is TARHKLESLL…IVSIQVELES (79 aa).

The protein belongs to the snRNP Sm proteins family. In terms of assembly, component of the N-terminal acetyltransferase C (NatC) complex.

Its subcellular location is the cytoplasm. It is found in the nucleus. In terms of biological role, auxillary component of the N-terminal acetyltransferase C (NatC) complex which catalyzes acetylation of N-terminal methionine residues. N-terminal acetylation protects proteins from ubiquitination and degradation by the N-end rule pathway. The polypeptide is N-alpha-acetyltransferase 38, NatC auxiliary subunit (naa38) (Xenopus tropicalis (Western clawed frog)).